Consider the following 354-residue polypeptide: Phosphate acyltransferase (354 aa).

This sequence belongs to the PlsX family. As to quaternary structure, homodimer. Probably interacts with PlsY.

The protein localises to the cytoplasm. The catalysed reaction is a fatty acyl-[ACP] + phosphate = an acyl phosphate + holo-[ACP]. It participates in lipid metabolism; phospholipid metabolism. In terms of biological role, catalyzes the reversible formation of acyl-phosphate (acyl-PO(4)) from acyl-[acyl-carrier-protein] (acyl-ACP). This enzyme utilizes acyl-ACP as fatty acyl donor, but not acyl-CoA. The protein is Phosphate acyltransferase of Bordetella petrii (strain ATCC BAA-461 / DSM 12804 / CCUG 43448).